The primary structure comprises 364 residues: Lipoyl synthase, mitochondrial (364 aa).

Residues P34 to Y53 form a disordered region. Residues C99, C104, C110, C130, C134, C137, and S345 each coordinate [4Fe-4S] cluster. The region spanning E115 to L334 is the Radical SAM core domain.

The protein belongs to the radical SAM superfamily. Lipoyl synthase family. Requires [4Fe-4S] cluster as cofactor.

It localises to the mitochondrion. It catalyses the reaction [[Fe-S] cluster scaffold protein carrying a second [4Fe-4S](2+) cluster] + N(6)-octanoyl-L-lysyl-[protein] + 2 oxidized [2Fe-2S]-[ferredoxin] + 2 S-adenosyl-L-methionine + 4 H(+) = [[Fe-S] cluster scaffold protein] + N(6)-[(R)-dihydrolipoyl]-L-lysyl-[protein] + 4 Fe(3+) + 2 hydrogen sulfide + 2 5'-deoxyadenosine + 2 L-methionine + 2 reduced [2Fe-2S]-[ferredoxin]. The protein operates within protein modification; protein lipoylation via endogenous pathway; protein N(6)-(lipoyl)lysine from octanoyl-[acyl-carrier-protein]: step 2/2. In terms of biological role, catalyzes the radical-mediated insertion of two sulfur atoms into the C-6 and C-8 positions of the octanoyl moiety bound to the lipoyl domains of lipoate-dependent enzymes, thereby converting the octanoylated domains into lipoylated derivatives. This is Lipoyl synthase, mitochondrial from Drosophila grimshawi (Hawaiian fruit fly).